We begin with the raw amino-acid sequence, 165 residues long: Large ribosomal subunit protein uL11 (165 aa).

Phosphoserine is present on Ser38. Lys40 participates in a covalent cross-link: Glycyl lysine isopeptide (Lys-Gly) (interchain with G-Cter in SUMO2). Lys48 is covalently cross-linked (Glycyl lysine isopeptide (Lys-Gly) (interchain with G-Cter in ubiquitin)). Position 54 is an N6-acetyllysine (Lys54). Residue Lys83 forms a Glycyl lysine isopeptide (Lys-Gly) (interchain with G-Cter in ubiquitin) linkage. At Ser165 the chain carries Phosphoserine.

It belongs to the universal ribosomal protein uL11 family. Component of the large ribosomal subunit. Mature ribosomes consist of a small (40S) and a large (60S) subunit. The 40S subunit contains about 33 different proteins and 1 molecule of RNA (18S). The 60S subunit contains about 49 different proteins and 3 molecules of RNA (28S, 5.8S and 5S). Ubiquitinated at Lys-48 and Lys-83 by RNF14 and RNF25 in response to ribosome collisions (ribosome stalling).

Its subcellular location is the cytoplasm. In terms of biological role, component of the large ribosomal subunit. The ribosome is a large ribonucleoprotein complex responsible for the synthesis of proteins in the cell. Binds directly to 26S ribosomal RNA. This is Large ribosomal subunit protein uL11 (Rpl12) from Rattus norvegicus (Rat).